The chain runs to 289 residues: N-methyltransferase FrzE (289 aa).

It belongs to the methyltransferase superfamily.

It catalyses the reaction (1S,4S)-4-[(4-hydroxyphenyl)methyl]-2,5-diazaspiro[bicyclo[3.2.1]octane-6,1'-cyclohexan]-4'-one + S-adenosyl-L-methionine = (1S,4S)-4-[(4-hydroxyphenyl)methyl]-2-methyl-2,5-diazaspiro[bicyclo[3.2.1]octane-6,1'-cyclohexan]-4'-one + S-adenosyl-L-homocysteine + H(+). The enzyme catalyses (1S,4S)-4-[(4-methoxyphenyl)methyl]-2,5-diazaspiro[bicyclo[3.2.1]octane-6,1'-cyclohexan]-4'-one + S-adenosyl-L-methionine = (1S,4S)-4-[(4-methoxyphenyl)methyl]-2-methyl-2,5-diazaspiro[bicyclo[3.2.1]octane-6,1'-cyclohexan]-4'-one + S-adenosyl-L-homocysteine + H(+). It participates in secondary metabolite biosynthesis. Its function is as follows. N-methyltransferase; part of the gene cluster that mediates the biosynthesis of the alkaloid (-)-FR901483, a potent immunosuppressant that shows efficacy in animal models and a probable inhibitor of purine nucleotide biosynthesis by targeting phosphoribosylpyrophosphate amidotransferase (PPAT). Within the pathway, FrzE methylates the amine at position C10'. The biosynthesis of (-)-FR901483 starts with the condensation of two L-tyrosines to yield (S,S)-dityrosyl-piperazine. This process occurs in 3 steps with the non-canonical nonribosomal peptide synthetase FrzA catalyzing the reduction of L-tyrosine into L-tyrosinal, the spontaneous condensation of 2 L-tyrosinal units, and the subsequent reduction by the NmrA-like family domain-containing oxidoreductase FrzB. The cytochrome P450 monooxygenase FrzC then performs coupling between N10 and C1' to morph the piperazine into a 1,4-diazabicyclo[3.2.1]octane spiro-fused to a 2,5-cyclohexadienone. The dienone portion is further reduced to cyclohexanone by the flavin-dependent reductase FrzD. The methyltranserases (MTs) FrzE and FrzF are then involved in the methylation at the C10' amine and the C4 phenolic oxygen, respectively. The order of the two MTs appear to be interchangeable. Cleavage of the C9-N10' bond by the dioxygenase FrzG then leads to formation of a conjugated iminium. In addition to the oxidation of C9, an additional dehydrogenation between C7 and C8 can occur to give a likely shunt product. The next biosynthetic step is the intramolecular aldol condensation catalyzed by the newly identified aldolase FrzH to yield an aza-tricyclic product with the formation of a C9-C3' bond. The short-chain dehydrogenase/reductase FrzI then produces dephospho-(-)-FR901483 that is phosphorylated at C4'-OH into (-)-FR901483 by the phosphotransferase FrzJ. The chain is N-methyltransferase FrzE from Cladobotryum sp.